A 1356-amino-acid chain; its full sequence is Vegetative incompatibility protein HET-E-1 (1356 aa).

An NACHT domain is found at 294–629 (RLLWINGDPG…DFLLGTASDK (336 aa)). A GTP-binding site is contributed by 300-307 (GDPGKGKT). WD repeat units follow at residues 839–869 (GHGSSVLSVAFSADGQRVASGSDDKTIKIWD), 881–911 (GHGGSVWSVAFSPDRERVASGSDDKTIKIWD), 923–953 (GHGGRVQSVAFSPDGQRVASGSDDHTIKIWD), 965–995 (GHGSSVLSVAFSPDGQRVASGSGDKTIKIWD), 1007–1037 (GHGGSVWSVAFSPDGQRVASGSDDKTIKIWD), 1049–1079 (GHGGWVQSVVFSPDGQRVASGSDDHTIKIWD), 1091–1121 (GHGDSVWSVAFSPDGQRVASGSIDGTIKIWD), 1133–1163 (GHGGWVHSVAFSPDGQRVASGSIDGTIKIWD), 1175–1205 (GHGGWVQSVAFSPDGQRVASGSSDKTIKIWD), and 1217–1247 (GHGGWVQSVAFSPDGQRVASGSSDNTIKIWD).

In terms of biological role, responsible for vegetative incompatibility through specific interactions with different alleles of the unlinked gene, het-c. The chain is Vegetative incompatibility protein HET-E-1 (HET-E1) from Podospora anserina (Pleurage anserina).